The sequence spans 306 residues: Glutaminase (306 aa).

7 residues coordinate substrate: S64, N115, E159, N166, Y190, Y242, and V260.

It belongs to the glutaminase family. As to quaternary structure, homotetramer.

The enzyme catalyses L-glutamine + H2O = L-glutamate + NH4(+). In Aliivibrio fischeri (strain MJ11) (Vibrio fischeri), this protein is Glutaminase.